A 206-amino-acid polypeptide reads, in one-letter code: Holliday junction branch migration complex subunit RuvA (206 aa).

A domain I region spans residues methionine 1 to isoleucine 63. The segment at aspartate 64–alanine 142 is domain II. The segment at glycine 143–isoleucine 153 is flexible linker. The tract at residues alanine 154–lysine 206 is domain III.

It belongs to the RuvA family. As to quaternary structure, homotetramer. Forms an RuvA(8)-RuvB(12)-Holliday junction (HJ) complex. HJ DNA is sandwiched between 2 RuvA tetramers; dsDNA enters through RuvA and exits via RuvB. An RuvB hexamer assembles on each DNA strand where it exits the tetramer. Each RuvB hexamer is contacted by two RuvA subunits (via domain III) on 2 adjacent RuvB subunits; this complex drives branch migration. In the full resolvosome a probable DNA-RuvA(4)-RuvB(12)-RuvC(2) complex forms which resolves the HJ.

It localises to the cytoplasm. Functionally, the RuvA-RuvB-RuvC complex processes Holliday junction (HJ) DNA during genetic recombination and DNA repair, while the RuvA-RuvB complex plays an important role in the rescue of blocked DNA replication forks via replication fork reversal (RFR). RuvA specifically binds to HJ cruciform DNA, conferring on it an open structure. The RuvB hexamer acts as an ATP-dependent pump, pulling dsDNA into and through the RuvAB complex. HJ branch migration allows RuvC to scan DNA until it finds its consensus sequence, where it cleaves and resolves the cruciform DNA. The protein is Holliday junction branch migration complex subunit RuvA of Corynebacterium glutamicum (strain R).